A 797-amino-acid chain; its full sequence is Xaa-Pro dipeptidyl-peptidase (797 aa).

Residues S370, D490, and H521 each act as charge relay system in the active site.

Belongs to the peptidase S15 family. In terms of assembly, homodimer.

The protein resides in the cytoplasm. It carries out the reaction Hydrolyzes Xaa-Pro-|- bonds to release unblocked, N-terminal dipeptides from substrates including Ala-Pro-|-p-nitroanilide and (sequentially) Tyr-Pro-|-Phe-Pro-|-Gly-Pro-|-Ile.. Functionally, removes N-terminal dipeptides sequentially from polypeptides having unsubstituted N-termini provided that the penultimate residue is proline. This Lacticaseibacillus casei (strain BL23) (Lactobacillus casei) protein is Xaa-Pro dipeptidyl-peptidase.